Here is a 98-residue protein sequence, read N- to C-terminus: A-type ATP synthase subunit F (98 aa).

Belongs to the V-ATPase F subunit family. The A-type ATPase is composed of subunits A(3), B(3), C, D, E(1 or 2), F, H(2), I and K(x).

The protein localises to the cell membrane. Component of the A-type ATP synthase that produces ATP from ADP in the presence of a proton gradient across the membrane. The chain is A-type ATP synthase subunit F from Methanocaldococcus jannaschii (strain ATCC 43067 / DSM 2661 / JAL-1 / JCM 10045 / NBRC 100440) (Methanococcus jannaschii).